A 551-amino-acid polypeptide reads, in one-letter code: Calcium-dependent protein kinase 19 (551 aa).

Glycine 2 carries the N-myristoyl glycine lipid modification. The segment at 12–46 (VKKPTPDISGEQNTEVKSREITPKEQPRQRQPAPR) is disordered. Residues 25–39 (TEVKSREITPKEQPR) show a composition bias toward basic and acidic residues. The Protein kinase domain occupies 98–357 (YSLGRELGRG…AAQVLEHPWI (260 aa)). Residues 104-112 (LGRGQFGIT) and lysine 127 each bind ATP. The active-site Proton acceptor is the aspartate 222. Serine 263 is subject to Phosphoserine. Residues 363–393 (ASDKPIDSAVLSRMKQLRAMNKLKKLAFKFI) form an autoinhibitory domain region. EF-hand domains follow at residues 400–435 (EELKGLKTMFANMDTDKSGTITYDELKSGLEKLGSR), 436–471 (LTETEVKQLLEDADVDGNGTIDYIEFISATMNRFRV), 472–507 (EREDNLFKAFQHFDKDNSGFISRQELETAMKEYNMG), and 512–542 (IKEIISEVDADNDGSINYQEFCNMMKSCSQS). Positions 413, 415, 417, 419, 424, 449, 451, 453, 455, 460, 485, 487, 489, 496, 520, 522, 524, 526, and 531 each coordinate Ca(2+).

Belongs to the protein kinase superfamily. Ser/Thr protein kinase family. CDPK subfamily.

The protein localises to the membrane. The catalysed reaction is L-seryl-[protein] + ATP = O-phospho-L-seryl-[protein] + ADP + H(+). It carries out the reaction L-threonyl-[protein] + ATP = O-phospho-L-threonyl-[protein] + ADP + H(+). Activated by calcium. Autophosphorylation may play an important role in the regulation of the kinase activity. Its function is as follows. May play a role in signal transduction pathways that involve calcium as a second messenger. The polypeptide is Calcium-dependent protein kinase 19 (CPK19) (Arabidopsis thaliana (Mouse-ear cress)).